The following is a 452-amino-acid chain: NADH-quinone oxidoreductase subunit N 2 (452 aa).

The next 14 helical transmembrane spans lie at Val6–Ile26, Thr33–Gly53, Thr70–Leu90, Ser97–Ala117, Leu120–Phe140, Tyr154–Ala174, Ile194–Phe214, Phe232–Ile252, Ile258–Leu278, Met286–Glu306, Ile311–Ile331, Phe355–Val375, Gly387–Leu407, and Ala432–Phe452.

The protein belongs to the complex I subunit 2 family. As to quaternary structure, NDH-1 is composed of 14 different subunits. Subunits NuoA, H, J, K, L, M, N constitute the membrane sector of the complex.

Its subcellular location is the cell inner membrane. The catalysed reaction is a quinone + NADH + 5 H(+)(in) = a quinol + NAD(+) + 4 H(+)(out). Its function is as follows. NDH-1 shuttles electrons from NADH, via FMN and iron-sulfur (Fe-S) centers, to quinones in the respiratory chain. The immediate electron acceptor for the enzyme in this species is believed to be ubiquinone. Couples the redox reaction to proton translocation (for every two electrons transferred, four hydrogen ions are translocated across the cytoplasmic membrane), and thus conserves the redox energy in a proton gradient. In Thermodesulfovibrio yellowstonii (strain ATCC 51303 / DSM 11347 / YP87), this protein is NADH-quinone oxidoreductase subunit N 2.